Here is a 553-residue protein sequence, read N- to C-terminus: CTP synthase (553 aa).

Residues 1-270 form an amidoligase domain region; sequence MTKFVFVTGG…DRIICEELRI (270 aa). Residue Ser13 coordinates CTP. Ser13 is a binding site for UTP. ATP is bound by residues 14–19 and Asp71; that span reads SLGKGI. Mg(2+)-binding residues include Asp71 and Glu144. CTP contacts are provided by residues 151 to 153, 191 to 196, and Lys227; these read DIE and KTKPTQ. Residues 191 to 196 and Lys227 contribute to the UTP site; that span reads KTKPTQ. Positions 295–547 constitute a Glutamine amidotransferase type-1 domain; sequence TIGMVGKYVD…VEAALAHQQN (253 aa). Gly356 is a binding site for L-glutamine. Cys383 acts as the Nucleophile; for glutamine hydrolysis in catalysis. Residues 384 to 387, Glu407, and Arg473 each bind L-glutamine; that span reads LGMQ. Active-site residues include His520 and Glu522.

This sequence belongs to the CTP synthase family. In terms of assembly, homotetramer.

The enzyme catalyses UTP + L-glutamine + ATP + H2O = CTP + L-glutamate + ADP + phosphate + 2 H(+). The catalysed reaction is L-glutamine + H2O = L-glutamate + NH4(+). It catalyses the reaction UTP + NH4(+) + ATP = CTP + ADP + phosphate + 2 H(+). It functions in the pathway pyrimidine metabolism; CTP biosynthesis via de novo pathway; CTP from UDP: step 2/2. Allosterically activated by GTP, when glutamine is the substrate; GTP has no effect on the reaction when ammonia is the substrate. The allosteric effector GTP functions by stabilizing the protein conformation that binds the tetrahedral intermediate(s) formed during glutamine hydrolysis. Inhibited by the product CTP, via allosteric rather than competitive inhibition. In terms of biological role, catalyzes the ATP-dependent amination of UTP to CTP with either L-glutamine or ammonia as the source of nitrogen. Regulates intracellular CTP levels through interactions with the four ribonucleotide triphosphates. This is CTP synthase from Ralstonia pickettii (strain 12J).